The sequence spans 200 residues: Small ribosomal subunit protein uS4 (200 aa).

A disordered region spans residues 22 to 42; that stretch reads TGKELEKRPYAPGPHGPNQRK. The S4 RNA-binding domain occupies 92-152; the sequence is ARLDNLVYRM…EKSNSLVVVK (61 aa).

It belongs to the universal ribosomal protein uS4 family. As to quaternary structure, part of the 30S ribosomal subunit. Contacts protein S5. The interaction surface between S4 and S5 is involved in control of translational fidelity.

Functionally, one of the primary rRNA binding proteins, it binds directly to 16S rRNA where it nucleates assembly of the body of the 30S subunit. In terms of biological role, with S5 and S12 plays an important role in translational accuracy. This is Small ribosomal subunit protein uS4 from Bacillus cereus (strain B4264).